A 791-amino-acid chain; its full sequence is uncharacterized protein (791 aa).

4 helical membrane passes run 104–124, 131–151, 177–197, and 226–246; these read MWILAFGLATVIAGVDAFFLM, IAAIVALLVAYPLGQLWYYII, ACLYIFVNICVSAKLVNTLII, and WSGLALPILVYPPTLIWPSVL. An N-linked (GlcNAc...) asparagine glycan is attached at Asn265. Helical transmembrane passes span 274-294, 309-329, 346-366, 421-441, 471-491, 501-521, 533-553, and 583-603; these read FFIVFVASFIWYWFPDLIFPA, SAVLSQIFGVKTGLGLFPLTL, WATCCIFTSFVFWIWIVLPGL, FIINIALSLGAFSSMMISFFL, VHWGFYLASIIVSLGLGFAFT, SYGFVVSMVIGAALYIPLSLI, AFFEIVAAFWFNGQPMALLYF, and LVAALLFTSGIWSSLVNSAVT. Asn621 is a glycosylation site (N-linked (GlcNAc...) asparagine). 3 consecutive transmembrane segments (helical) span residues 653–673, 697–717, and 733–753; these read FVMWFFLVGAVVSVVVYLLQI, SVTGINYSTWAAVAFCFNYLI, and AAAMDCGVAIAGLFIYFCVVY. A glycan (N-linked (GlcNAc...) asparagine) is linked at Asn759.

It belongs to the oligopeptide OPT transporter family.

Its subcellular location is the membrane. This is an uncharacterized protein from Schizosaccharomyces pombe (strain 972 / ATCC 24843) (Fission yeast).